Here is a 203-residue protein sequence, read N- to C-terminus: 2-hydroxychromene-2-carboxylate isomerase (203 aa).

Residue Ser-11 is the Nucleophile of the active site. Ser-11 lines the glutathione pocket. Substrate-binding positions include Lys-43, 53-54 (NR), and Tyr-84. Glutathione-binding positions include Val-168 and 179–182 (WGND).

This sequence belongs to the GST superfamily. NadH family. The cofactor is glutathione.

It catalyses the reaction 2-hydroxychromene-2-carboxylate = (3E)-4-(2-hydroxyphenyl)-2-oxobut-3-enoate. Its pathway is aromatic compound metabolism; naphthalene degradation. Involved in the naphthalene catabolic pathway. Catalyzes the reversible glutathione-dependent isomerization of 2-hydroxychromene-2-carboxylate (HCCA) to trans-O-hydroxybenzylidenepyruvate (THBPA). The sequence is that of 2-hydroxychromene-2-carboxylate isomerase (nahD) from Pseudomonas putida (Arthrobacter siderocapsulatus).